A 296-amino-acid polypeptide reads, in one-letter code: Cytidine deaminase (296 aa).

CMP/dCMP-type deaminase domains are found at residues 47–167 (SQDE…FGPA) and 186–296 (ESAD…VDPV). 88–90 (NLE) contacts substrate. Zn(2+) is bound at residue histidine 101. Glutamate 103 (proton donor) is an active-site residue. 2 residues coordinate Zn(2+): cysteine 128 and cysteine 131.

This sequence belongs to the cytidine and deoxycytidylate deaminase family. As to quaternary structure, homodimer. The cofactor is Zn(2+).

It carries out the reaction cytidine + H2O + H(+) = uridine + NH4(+). The catalysed reaction is 2'-deoxycytidine + H2O + H(+) = 2'-deoxyuridine + NH4(+). In terms of biological role, this enzyme scavenges exogenous and endogenous cytidine and 2'-deoxycytidine for UMP synthesis. This chain is Cytidine deaminase, found in Shewanella loihica (strain ATCC BAA-1088 / PV-4).